Consider the following 264-residue polypeptide: MKSYENDPITDKLPKLKSSREWLEPQPLSFMEVLAKEDVDTAIQSILYRENYIIKELDKCLKHHDFLNARRKEILYKRWVDHVADPLQKKIIEKVTSYKKIKKRRQEELDGFLKYVNKKGNAFIEHYDPKEYDPFYMNRENPNFLKVTIPPFRDPLKKAQYDKDDGKRILLQCETGKIYTMKEFKEVEKAKLHSRFPGISNSRHLMTPNEWIRLPPNYIESEFCKRSRLKIKVNFNESSFDLKPSVRTPHPEFQKEDKAVHYKF.

It belongs to the FAM228 family.

The chain is Protein FAM228B (FAM228B) from Bos taurus (Bovine).